We begin with the raw amino-acid sequence, 153 residues long: UPF0266 membrane protein SG1324 (153 aa).

The next 3 helical transmembrane spans lie at 6 to 26, 46 to 66, and 68 to 88; these read IGLV…EFIV, LDGL…ITTD, and KVMT…LAYI.

It belongs to the UPF0266 family.

The protein resides in the cell inner membrane. The polypeptide is UPF0266 membrane protein SG1324 (Sodalis glossinidius (strain morsitans)).